Reading from the N-terminus, the 812-residue chain is Plasminogen (812 aa).

The first 19 residues, 1–19, serve as a signal peptide directing secretion; it reads MDHKEIILLFLLFLKPGQG. The 79-residue stretch at 20–98 folds into the PAN domain; it reads DSLDGYVSTQ…RDVILFEKRV (79 aa). 21 cysteine pairs are disulfide-bonded: Cys-49–Cys-73, Cys-53–Cys-61, Cys-103–Cys-181, Cys-124–Cys-164, Cys-152–Cys-176, Cys-185–Cys-262, Cys-188–Cys-316, Cys-206–Cys-245, Cys-234–Cys-257, Cys-275–Cys-352, Cys-296–Cys-335, Cys-324–Cys-347, Cys-376–Cys-454, Cys-397–Cys-437, Cys-425–Cys-449, Cys-481–Cys-560, Cys-502–Cys-543, Cys-531–Cys-555, Cys-568–Cys-687, Cys-578–Cys-586, and Cys-609–Cys-625. 5 Kringle domains span residues 102–181, 184–262, 274–352, 375–454, and 480–560; these read ECKT…IPEC, ECMY…IPRC, QCLK…IPSC, ECYQ…LKRC, and DCMY…IPLC. The 229-residue stretch at 582-810 folds into the Peptidase S1 domain; it reads VVGGCVANPH…YVNWIEREMR (229 aa). A Phosphoserine modification is found at Ser-598. Active-site charge relay system residues include His-624 and Asp-667. Ser-690 is subject to Phosphoserine. Intrachain disulfides connect Cys-701–Cys-768, Cys-731–Cys-747, and Cys-758–Cys-786. Ser-762 serves as the catalytic Charge relay system.

It belongs to the peptidase S1 family. Plasminogen subfamily. Interacts (both mature PLG and the angiostatin peptide) with AMOT and CSPG4. Interacts (via the Kringle domains) with HRG; the interaction tethers PLG to the cell surface and enhances its activation. Interacts (via Kringle 4 domain) with ADA; the interaction stimulates PLG activation when in complex with DPP4. Angiostatin: Interacts with ATP5F1A; the interaction inhibits most of the angiogenic effects of angiostatin. In terms of processing, in the presence of the inhibitor, the activation involves only cleavage after Arg-581, yielding two chains held together by two disulfide bonds. In the absence of the inhibitor, the activation involves additionally the removal of the activation peptide.

Its subcellular location is the secreted. The catalysed reaction is Preferential cleavage: Lys-|-Xaa &gt; Arg-|-Xaa, higher selectivity than trypsin. Converts fibrin into soluble products.. Converted into plasmin by plasminogen activators, both plasminogen and its activator being bound to fibrin. Cannot be activated with streptokinase. Its function is as follows. Plasmin dissolves the fibrin of blood clots and acts as a proteolytic factor in a variety of other processes including embryonic development, tissue remodeling, tumor invasion, and inflammation. In ovulation, weakens the walls of the Graafian follicle. It activates the urokinase-type plasminogen activator, collagenases and several complement zymogens, such as C1, C4 and C5. Cleavage of fibronectin and laminin leads to cell detachment and apoptosis. Also cleaves fibrin, thrombospondin and von Willebrand factor. Its role in tissue remodeling and tumor invasion may be modulated by CSPG4. Binds to cells. In terms of biological role, angiostatin is an angiogenesis inhibitor that blocks neovascularization and growth of experimental primary and metastatic tumors in vivo. This chain is Plasminogen (Plg), found in Rattus norvegicus (Rat).